Consider the following 178-residue polypeptide: Conodipine-P3 (178 aa).

The first 24 residues, 1 to 24, serve as a signal peptide directing secretion; sequence MKLLAPVLWAMAALGVTWLVAVDS. Residue Pro38 is modified to 4-hydroxyproline. 2 positions are modified to 4-hydroxyproline; partial: Pro42 and Pro49. His54 is a catalytic residue. Residues 98–130 constitute a propeptide, interchain peptide; the sequence is KREVTSHRATSIAHSRLWKTALDQKSFLNRKAR. The residue at position 131 (Gln131) is a Pyrrolidone carboxylic acid. Residue Pro137 is modified to 4-hydroxyproline; partial.

This sequence belongs to the phospholipase A2 family. Group IX subfamily. Heterodimer of an alpha and a beta chain; probably disulfide-linked. Requires Ca(2+) as cofactor. Expressed by the venom duct.

The protein localises to the secreted. The enzyme catalyses a 1,2-diacyl-sn-glycero-3-phosphocholine + H2O = a 1-acyl-sn-glycero-3-phosphocholine + a fatty acid + H(+). Catalyzes the calcium-dependent hydrolysis of the 2-acyl groups in 3-sn-phosphoglycerides. The polypeptide is Conodipine-P3 (Conus purpurascens (Purple cone)).